A 1182-amino-acid polypeptide reads, in one-letter code: Tyrosine-protein kinase ABL2 (1182 aa).

Disordered stretches follow at residues 1 to 47 and 60 to 80; these read MGQQ…TGFN and EDGF…HRPY. Gly-2 carries N-myristoyl glycine lipidation. A CAP region spans residues 2–106; sequence GQQVGRVGEA…SKENLLGATE (105 aa). Low complexity predominate over residues 20–30; that stretch reads RGIRGSSAARP. Residue Ser-97 is modified to Phosphoserine. Residues 107–167 enclose the SH3 domain; sequence SDPNLFVALY…PSNYITPVNS (61 aa). Residues Tyr-116, Tyr-161, Tyr-174, Tyr-185, Tyr-218, and Tyr-231 each carry the phosphotyrosine modification. Residues 173–263 enclose the SH2 domain; the sequence is WYHGPVSRSA…GLVTTLHYPA (91 aa). Phosphotyrosine; by ABL1 and autocatalysis is present on Tyr-261. Tyr-272 bears the Phosphotyrosine; by autocatalysis mark. Ser-275 bears the Phosphoserine mark. A Protein kinase domain is found at 288–539; the sequence is ITMKHKLGGG…PSFAETHQAF (252 aa). 294–302 is a binding site for ATP; it reads LGGGQYGEV. Phosphotyrosine is present on residues Tyr-299 and Tyr-303. Residues Lys-317 and 362–368 each bind ATP; that span reads EYMPYGN. The Proton acceptor role is filled by Asp-409. The Kinase activation loop signature appears at 427–451; it reads DFGLSRLMTGDTYTAHAGAKFPIKW. Tyr-439 carries the post-translational modification Phosphotyrosine; by autocatalysis and SRC-type Tyr-kinases. The residue at position 459 (Tyr-459) is a Phosphotyrosine. A Phosphotyrosine; by autocatalysis modification is found at Tyr-568. The tract at residues 611 to 641 is disordered; sequence IRGAQASSGSPALPRKQRDKSPSSLLEDAKE. Ser-620, Ser-631, and Ser-633 each carry phosphoserine. Asp-647 bears the Phosphotyrosine mark. The disordered stretch occupies residues 654 to 674; it reads SSFMKKRNAPTPPKRSSSFRE. Ser-655 carries the post-translational modification Phosphoserine. A Nuclear localization signal motif is present at residues 658–660; that stretch reads KKR. Phosphotyrosine is present on residues Ala-662 and Arg-668. Residues Ser-669, Ser-670, and Ser-671 each carry the phosphoserine modification. 2 positions are modified to phosphotyrosine: Tyr-683 and Tyr-718. At Tyr-683 the chain carries Phosphotyrosine; by autocatalysis. Residues 694-930 form an F-actin-binding region; it reads SLQHADGFSF…PVLPTTHNHK (237 aa). A disordered region spans residues 763-794; it reads LRAGKPTASDDTSKPFPRSNSTSSMSSGLPEQ. Lys-776 is modified (N6-acetyllysine). Over residues 780-791 the composition is skewed to polar residues; that stretch reads RSNSTSSMSSGL. Ser-783 is subject to Phosphoserine. A Phosphothreonine modification is found at Thr-800. A compositionally biased stretch (polar residues) spans 807-823; sequence RSKLQLERTVSTSSQPE. Residues 807-851 form a disordered region; the sequence is RSKLQLERTVSTSSQPEENVDRANDMLPKKSEESAAPSRERPKAK. Phosphoserine is present on residues Ser-817 and Ser-820. Positions 825–849 are enriched in basic and acidic residues; it reads NVDRANDMLPKKSEESAAPSRERPK. Phosphoserine occurs at positions 915 and 936. Residues 964 to 1024 are disordered; sequence HQVTSSGDKD…TSETQEGGKK (61 aa). Over residues 1010–1019 the composition is skewed to polar residues; the sequence is TAGQSTSETQ. An F-actin-binding region spans residues 1020-1182; it reads EGGKKAALGA…VQEISDVVQR (163 aa).

Belongs to the protein kinase superfamily. Tyr protein kinase family. ABL subfamily. As to quaternary structure, interacts with PSMA7. Interacts with CTTN. Found in a complex with ABL1, ABL2, CRK and UNC119; leading to the inhibition of CRK phosphorylation by ABL kinases. Mg(2+) is required as a cofactor. The cofactor is Mn(2+). Post-translationally, phosphorylated at Tyr-261 by ABL1 in response to oxidative stress. Phosphorylated by PDGFRB. Polyubiquitinated. Polyubiquitination of ABL2 leads to degradation. Widely expressed.

It localises to the cytoplasm. The protein localises to the cytoskeleton. It carries out the reaction L-tyrosyl-[protein] + ATP = O-phospho-L-tyrosyl-[protein] + ADP + H(+). Its activity is regulated as follows. Stabilized in the inactive form by an association between the SH3 domain and the SH2-TK linker region, interactions of the N-terminal cap, and contributions from an N-terminal myristoyl group and phospholipids. Activated by autophosphorylation as well as by SRC-family kinase-mediated phosphorylation. Activated by RIN1 binding to the SH2 and SH3 domains. Inhibited by imatinib mesylate (Gleevec) which is used for the treatment of chronic myeloid leukemia (CML). Phosphatidylinositol 4,5-bisphosphate (PIP2), a highly abundant phosphoinositide known to regulate cytoskeletal and membrane proteins, inhibits the tyrosine kinase activity. Its function is as follows. Non-receptor tyrosine-protein kinase that plays an ABL1-overlapping role in key processes linked to cell growth and survival such as cytoskeleton remodeling in response to extracellular stimuli, cell motility and adhesion and receptor endocytosis. Coordinates actin remodeling through tyrosine phosphorylation of proteins controlling cytoskeleton dynamics like MYH10 (involved in movement); CTTN (involved in signaling); or TUBA1 and TUBB (microtubule subunits). Binds directly F-actin and regulates actin cytoskeletal structure through its F-actin-bundling activity. Involved in the regulation of cell adhesion and motility through phosphorylation of key regulators of these processes such as CRK, CRKL, DOK1 or ARHGAP35. Adhesion-dependent phosphorylation of ARHGAP35 promotes its association with RASA1, resulting in recruitment of ARHGAP35 to the cell periphery where it inhibits RHO. Phosphorylates multiple receptor tyrosine kinases like PDGFRB and other substrates which are involved in endocytosis regulation such as RIN1. In brain, may regulate neurotransmission by phosphorylating proteins at the synapse. ABL2 also acts as a regulator of multiple pathological signaling cascades during infection. Pathogens can highjack ABL2 kinase signaling to reorganize the host actin cytoskeleton for multiple purposes, like facilitating intracellular movement and host cell exit. Finally, functions as its own regulator through autocatalytic activity as well as through phosphorylation of its inhibitor, ABI1. Positively regulates chemokine-mediated T-cell migration, polarization, and homing to lymph nodes and immune-challenged tissues, potentially via activation of NEDD9/HEF1 and RAP1. The polypeptide is Tyrosine-protein kinase ABL2 (ABL2) (Homo sapiens (Human)).